A 994-amino-acid chain; its full sequence is Zinc finger protein basonuclin-1 (994 aa).

The disordered stretch occupies residues 1-29 (MRRRPPSRGGRGAARARETRRQPRHRSGR). The interval 240–249 (MTFMLPFQFF) is hydrophobic. C2H2-type zinc fingers lie at residues 357–380 (VFCTACEKTFYDKGTLKIHYNAVH) and 385–414 (HKCTIEGCNMVFSSLRSRNRHSANPNPRLH). Disordered regions lie at residues 402 to 425 (RNRHSANPNPRLHMPMNRNNRDKD) and 444 to 472 (TVTSPDCRPPPSYPGSGEDSKGQPAFPNI). The Nuclear localization signal signature appears at 533 to 539 (PKKKSRK). Phosphoserine is present on residues Ser-537 and Ser-541. Positions 555–639 (NEKRHNLSSD…HNSERETEQT (85 aa)) are disordered. A compositionally biased stretch (acidic residues) spans 563 to 578 (SDEDMPLQVVSEDEQE). Residues 603-614 (PEGERPCHRESV) are compositionally biased toward basic and acidic residues. A compositionally biased stretch (polar residues) spans 615–630 (IESSGAISQTPEQATH). 2 consecutive C2H2-type zinc fingers follow at residues 720 to 743 (FQCDICKKTFKNACSVKIHHKNMH) and 748 to 775 (HTCTVEGCNATFPSRRSRDRHSSNLNLH). The segment covering 859-877 (STTSSMKSESSSHSSWDSD) has biased composition (low complexity). The segment at 859 to 881 (STTSSMKSESSSHSSWDSDGVSE) is disordered. 2 consecutive C2H2-type zinc fingers follow at residues 928-951 (ITCHLCQKTYSNKGTFRAHYKTVH) and 956-983 (HKCKVPGCNTMFSSVRSRNRHSQNPNLH). A disordered region spans residues 970 to 994 (VRSRNRHSQNPNLHKSLASSPSHLQ).

As to quaternary structure, interacts with HSF2BP (via C-terminus). Post-translationally, phosphorylation on Ser-537 and Ser-541 leads to cytoplasmic localization. As to expression, in epidermis, primarily detected in cells of the basal or immediately suprabasal layers (at protein level). In hair follicles, mainly expressed in the outer root sheath (at protein level). Expressed in epidermis, testis and foreskin, and to a lower extent in thymus, spleen, mammary glands, placenta, brain and heart. Expressed in the ovary, notably in oocytes.

It localises to the nucleus. The protein resides in the cytoplasm. It is found in the nucleoplasm. Its function is as follows. Transcriptional activator. It is likely involved in the regulation of keratinocytes terminal differentiation in squamous epithelia and hair follicles. Required for the maintenance of spermatogenesis. It is involved in the positive regulation of oocyte maturation, probably acting through the control of BMP15 levels and regulation of AKT signaling cascade. May also play a role in the early development of embryos. This chain is Zinc finger protein basonuclin-1 (BNC1), found in Homo sapiens (Human).